The following is a 389-amino-acid chain: Acetylornithine aminotransferase (389 aa).

Pyridoxal 5'-phosphate-binding positions include 104–105 (GT) and Phe-131. Arg-134 contributes to the N(2)-acetyl-L-ornithine binding site. 216-219 (DEVQ) contributes to the pyridoxal 5'-phosphate binding site. N6-(pyridoxal phosphate)lysine is present on Lys-245. N(2)-acetyl-L-ornithine is bound at residue Ser-273. Thr-274 serves as a coordination point for pyridoxal 5'-phosphate.

This sequence belongs to the class-III pyridoxal-phosphate-dependent aminotransferase family. ArgD subfamily. In terms of assembly, homodimer. Requires pyridoxal 5'-phosphate as cofactor.

The protein localises to the cytoplasm. The catalysed reaction is N(2)-acetyl-L-ornithine + 2-oxoglutarate = N-acetyl-L-glutamate 5-semialdehyde + L-glutamate. It functions in the pathway amino-acid biosynthesis; L-arginine biosynthesis; N(2)-acetyl-L-ornithine from L-glutamate: step 4/4. The protein is Acetylornithine aminotransferase of Methanopyrus kandleri (strain AV19 / DSM 6324 / JCM 9639 / NBRC 100938).